The chain runs to 391 residues: Adaptive-response sensory kinase SasA (391 aa).

The Histidine kinase domain occupies 169 to 391; it reads MLAHDLRSPL…CFHFTLPVCR (223 aa). Histidine 172 is subject to Phosphohistidine; by autocatalysis.

Homooligomerizes. Interacts with KaiC. Participates in the KaiABC clock complex, whose core is composed of a KaiC homohexamer, 6 KaiB and up to 6 KaiA dimers. SasA and KaiB(fs) compete to bind to KaiC.

The enzyme catalyses ATP + protein L-histidine = ADP + protein N-phospho-L-histidine.. In terms of biological role, member of the two-component regulatory system SasA/RpaA involved in genome-wide circadian gene expression. One of several clock output pathways. Participates in the Kai clock protein complex, the main circadian regulator in cyanobacteria, via its interaction with KaiC. KaiC enhances the autophosphorylation activity of SasA, which then transfers its phosphate group to RpaA to activate it. In addition to its output function, recruits fold-shifted KaiB (KaiB(fs)) to KaiC to cooperatively form the KaiB(6):KaiC(6) complex (independent of SasA kinase activity). Required for robustness of the circadian rhythm of gene expression and is involved in clock output, also required for adaptation to light/dark cycles. This chain is Adaptive-response sensory kinase SasA, found in Rippkaea orientalis (strain PCC 8801 / RF-1) (Cyanothece sp. (strain PCC 8801)).